A 571-amino-acid polypeptide reads, in one-letter code: Urease subunit alpha (571 aa).

Positions 138, 140, and 221 each coordinate Ni(2+). An N6-carboxylysine modification is found at K221. H223 lines the substrate pocket. Residues H250 and H276 each coordinate Ni(2+). The active-site Proton donor is H324. D364 is a Ni(2+) binding site.

The protein belongs to the metallo-dependent hydrolases superfamily. Urease alpha subunit family. As to quaternary structure, heterotrimer of UreA (gamma), UreB (beta) and UreC (alpha) subunits. Three heterotrimers associate to form the active enzyme. It depends on Ni cation as a cofactor. Post-translationally, carboxylation allows a single lysine to coordinate two nickel ions.

It localises to the cytoplasm. The enzyme catalyses urea + 2 H2O + H(+) = hydrogencarbonate + 2 NH4(+). It participates in nitrogen metabolism; urea degradation; CO(2) and NH(3) from urea (urease route): step 1/1. The sequence is that of Urease subunit alpha from Staphylococcus aureus (strain JH9).